The chain runs to 373 residues: Unsaturated rhamnogalacturonyl hydrolase YteR (373 aa).

Substrate is bound by residues 40–41 (HY), Asp-88, and 132–136 (HKDGY). The Proton donor role is filled by Asp-143. Residues 213 to 217 (RSIGW) and 333 to 334 (TS) contribute to the substrate site.

Belongs to the glycosyl hydrolase 105 family. Monomer.

It is found in the cytoplasm. It carries out the reaction 2-O-(4-deoxy-beta-L-threo-hex-4-enopyranuronosyl)-alpha-L-rhamnose + H2O = 5-dehydro-4-deoxy-D-glucuronate + L-rhamnopyranose. In terms of biological role, catalyzes the hydrolysis of unsaturated rhamnogalacturonan disaccharide to yield unsaturated D-galacturonic acid and L-rhamnose. It cannot act on unsaturated glucuronyl hydrolase (UGL) substrates containing unsaturated D-glucuronic acid at the non-reducing terminus, although the active pockets of YesR and UGL are very similar. The polypeptide is Unsaturated rhamnogalacturonyl hydrolase YteR (yteR) (Bacillus subtilis (strain 168)).